Here is a 187-residue protein sequence, read N- to C-terminus: Biogenesis of lysosome-related organelles complex 1 subunit 5 (187 aa).

The segment at 1-27 is disordered; it reads MSGGGTETPVACEAAQGGGGKKRDSLG. Position 2 is an N-acetylserine (Ser2).

The protein belongs to the BLOC1S5 family. As to quaternary structure, octamer composed of one copy each BLOC1S1, BLOC1S2, BLOC1S3, BLOC1S4, BLOC1S5, BLOC1S6, DTNBP1/BLOC1S7 and SNAPIN/BLOC1S8. The BLOC-1 complex associates with the AP-3 protein complex and membrane protein cargos. Interacts with BLOC1S4, BLOC1S6, DTNBP1/BLOC1S7 and PI4K2A. Component of the biogenesis of lysosome-related organelles complex 1 (BLOC-1) composed of BLOC1S1, BLOC1S2, BLOC1S3, BLOC1S4, BLOC1S5, BLOC1S6, DTNBP1/BLOC1S7 and SNAPIN/BLOC1S8.

Component of the BLOC-1 complex, a complex that is required for normal biogenesis of lysosome-related organelles (LRO), such as platelet dense granules and melanosomes. In concert with the AP-3 complex, the BLOC-1 complex is required to target membrane protein cargos into vesicles assembled at cell bodies for delivery into neurites and nerve terminals. The BLOC-1 complex, in association with SNARE proteins, is also proposed to be involved in neurite extension. Plays a role in intracellular vesicle trafficking. The sequence is that of Biogenesis of lysosome-related organelles complex 1 subunit 5 (Bloc1s5) from Rattus norvegicus (Rat).